Here is a 125-residue protein sequence, read N- to C-terminus: Small ribosomal subunit protein uS13 (125 aa).

Positions 101 to 125 (QRTKTNARTRKGKRKTVANKKIAAK) are disordered.

Belongs to the universal ribosomal protein uS13 family. As to quaternary structure, part of the 30S ribosomal subunit. Forms a loose heterodimer with protein S19. Forms two bridges to the 50S subunit in the 70S ribosome.

Functionally, located at the top of the head of the 30S subunit, it contacts several helices of the 16S rRNA. In the 70S ribosome it contacts the 23S rRNA (bridge B1a) and protein L5 of the 50S subunit (bridge B1b), connecting the 2 subunits; these bridges are implicated in subunit movement. Contacts the tRNAs in the A and P-sites. The polypeptide is Small ribosomal subunit protein uS13 (Borrelia duttonii (strain Ly)).